A 329-amino-acid chain; its full sequence is Helicase VP6-A (329 aa).

Disordered regions lie at residues 27 to 130 and 189 to 232; these read INLV…TNGG and DLRR…SEEP. 3 stretches are compositionally biased toward basic and acidic residues: residues 36-58, 65-83, and 96-109; these read EGGK…KDGE, GQKE…DRRI, and SGER…RGDG. Lys-110 is an ATP binding site. The segment covering 110 to 129 has biased composition (gly residues); that stretch reads KVGGGGGDADAGVGATGTNG. Composition is skewed to basic and acidic residues over residues 189-207 and 215-232; these read DLRR…ERGG and HGDA…SEEP.

Belongs to the reoviruses VP6 family. In terms of assembly, homohexamer.

It is found in the virion. The catalysed reaction is ATP + H2O = ADP + phosphate + H(+). Its function is as follows. ATP dependent RNA helicase essential for RNA packaging and viral transcription. Possesses ss- and dsRNA-binding capacity. This chain is Helicase VP6-A (Segment-9), found in Antilocapra americana (Pronghorn).